Here is a 326-residue protein sequence, read N- to C-terminus: Eukaryotic translation initiation factor 3 subunit I (326 aa).

5 WD repeats span residues 8 to 47 (GHER…RLGT), 50 to 89 (GHQG…VIAS), 145 to 184 (MVES…KVVD), 188 to 227 (DHAA…CLKT), and 285 to 326 (GHFG…NIFE).

Belongs to the eIF-3 subunit I family. As to quaternary structure, component of the eukaryotic translation initiation factor 3 (eIF-3) complex. The eIF-3 complex interacts with pix.

It is found in the cytoplasm. Component of the eukaryotic translation initiation factor 3 (eIF-3) complex, which is involved in protein synthesis of a specialized repertoire of mRNAs and, together with other initiation factors, stimulates binding of mRNA and methionyl-tRNAi to the 40S ribosome. The eIF-3 complex specifically targets and initiates translation of a subset of mRNAs involved in cell proliferation. The chain is Eukaryotic translation initiation factor 3 subunit I from Drosophila grimshawi (Hawaiian fruit fly).